Here is a 207-residue protein sequence, read N- to C-terminus: Large ribosomal subunit protein uL4 (207 aa).

Positions 55 to 76 (ALVSGGGKKPWRQKGTGRARHG) are disordered. A compositionally biased stretch (basic residues) spans 63–76 (KPWRQKGTGRARHG).

Belongs to the universal ribosomal protein uL4 family. As to quaternary structure, part of the 50S ribosomal subunit.

One of the primary rRNA binding proteins, this protein initially binds near the 5'-end of the 23S rRNA. It is important during the early stages of 50S assembly. It makes multiple contacts with different domains of the 23S rRNA in the assembled 50S subunit and ribosome. Functionally, forms part of the polypeptide exit tunnel. The protein is Large ribosomal subunit protein uL4 of Phytoplasma mali (strain AT).